A 506-amino-acid polypeptide reads, in one-letter code: UDP-N-acetylglucosamine--peptide N-acetylglucosaminyltransferase GtfA subunit (506 aa).

Residues 1–78 are N-terminus R-fold-1; sequence MTVYNINLGI…FTDIKIAPTT (78 aa). 16 to 19 contributes to the UDP binding site; it reads GVEY. The tract at residues 79-195 is extended beta-sheet domain; that stretch reads VTLDQVLAQV…LYRFPDRIFY (117 aa). Positions 196–306 are C-terminus R-fold-1; the sequence is SKAELVRYFL…QPQIATIPVG (111 aa). An N-acetyl-D-glucosamine-binding site is contributed by His242. Positions 307–506 are R-fold-2; that stretch reads SLDQLTYPKE…LKEVRDDSAL (200 aa). UDP-binding positions include Arg328, Tyr357, and 383–385; that span reads GHA. 405–407 contacts N-acetyl-D-glucosamine; it reads GFG. Position 409 (Thr409) interacts with UDP.

It belongs to the glycosyltransferase group 1 family. Glycosyltransferase 4 subfamily. In terms of assembly, forms a heterotetramer with 2 subunits each of GtfA and GtfB. Part of the accessory SecA2/SecY2 protein translocation apparatus required to export cell wall protein GspB.

The protein resides in the cytoplasm. The protein localises to the cell membrane. It catalyses the reaction L-seryl-[protein] + UDP-N-acetyl-alpha-D-glucosamine = 3-O-[N-acetyl-alpha-D-glucosaminyl]-L-seryl-[protein] + UDP + H(+). The protein operates within protein modification; protein glycosylation. Required for polymorphic O-glycosylation of GspB, a serine-rich repeat cell wall protein encoded upstream in the same operon. Catalyzes the first step in glycosylation by transferring N-acetylglucosamine from UDP-GlcNAc to serine residues in GspB. Part of the accessory SecA2/SecY2 system specifically required to export GspB. Upon coexpression in E.coli with GtfB glycosylates GspB constructs. Glycosylation probably occurs intracellularly. Requires GtfB for glycosylation activity, it has no activity alone. Does not use UDP-glucose as substrate. Has a fast, probably processive glycosylation phase followed by a slower, non-processive phase. The enzyme probably modifies its tertiary conformation by opening and closing its intersubunit interfaces to accomodate the increasingly glycosylated substrate; protein substrate recognition is provided by GtfB. This is UDP-N-acetylglucosamine--peptide N-acetylglucosaminyltransferase GtfA subunit from Streptococcus gordonii.